The primary structure comprises 354 residues: DNA polymerase IV (354 aa).

A UmuC domain is found at 6–187 (IIHIDCDCFY…LPVARLHGVG (182 aa)). The Mg(2+) site is built by Asp-10 and Asp-105. The active site involves Glu-106.

Belongs to the DNA polymerase type-Y family. In terms of assembly, monomer. Mg(2+) is required as a cofactor.

It is found in the cytoplasm. The enzyme catalyses DNA(n) + a 2'-deoxyribonucleoside 5'-triphosphate = DNA(n+1) + diphosphate. In terms of biological role, poorly processive, error-prone DNA polymerase involved in untargeted mutagenesis. Copies undamaged DNA at stalled replication forks, which arise in vivo from mismatched or misaligned primer ends. These misaligned primers can be extended by PolIV. Exhibits no 3'-5' exonuclease (proofreading) activity. May be involved in translesional synthesis, in conjunction with the beta clamp from PolIII. The polypeptide is DNA polymerase IV (Pseudomonas entomophila (strain L48)).